Consider the following 139-residue polypeptide: Cystatin-11 (139 aa).

The first 28 residues, 1–28, serve as a signal peptide directing secretion; the sequence is MAAGSWKATRLLLAILVALVAFSYQVKR. 2 disulfides stabilise this stretch: Cys94–Cys102 and Cys115–Cys135. Asn134 carries an N-linked (GlcNAc...) asparagine glycan.

Belongs to the cystatin family. As to expression, expressed in epididymis, where it localizes to the proximal caput and also part of the midcaput. Not detected in other tissues tested.

It is found in the secreted. Has antibacterial activity against the Gram-negative bacteria E.coli. May play a role in sperm maturation and fertilization. This Mus musculus (Mouse) protein is Cystatin-11.